Consider the following 376-residue polypeptide: tRNA(Met) cytidine acetate ligase (376 aa).

ATP-binding positions include 7 to 20 (IAEY…HYYQ), Gly102, Asn160, and Arg181.

It belongs to the TmcAL family.

The protein localises to the cytoplasm. It catalyses the reaction cytidine(34) in elongator tRNA(Met) + acetate + ATP = N(4)-acetylcytidine(34) in elongator tRNA(Met) + AMP + diphosphate. Functionally, catalyzes the formation of N(4)-acetylcytidine (ac(4)C) at the wobble position of elongator tRNA(Met), using acetate and ATP as substrates. First activates an acetate ion to form acetyladenylate (Ac-AMP) and then transfers the acetyl group to tRNA to form ac(4)C34. The protein is tRNA(Met) cytidine acetate ligase of Exiguobacterium sp. (strain ATCC BAA-1283 / AT1b).